The chain runs to 459 residues: Bifunctional protein GlmU (459 aa).

The tract at residues 1–229 (MSNFAIILAA…FDESLGVNDR (229 aa)) is pyrophosphorylase. Residues 8–11 (LAAG), lysine 22, glutamine 72, and 77–78 (GT) contribute to the UDP-N-acetyl-alpha-D-glucosamine site. Aspartate 102 serves as a coordination point for Mg(2+). UDP-N-acetyl-alpha-D-glucosamine-binding residues include glycine 139, glutamate 154, asparagine 169, and asparagine 227. Residue asparagine 227 participates in Mg(2+) binding. The segment at 230-250 (VALATAESVMRRRINHKHMVN) is linker. The tract at residues 251 to 459 (GVSFVNPEAT…TRLPHHPKNQ (209 aa)) is N-acetyltransferase. UDP-N-acetyl-alpha-D-glucosamine-binding residues include arginine 332 and lysine 350. Histidine 362 functions as the Proton acceptor in the catalytic mechanism. Tyrosine 365 and asparagine 376 together coordinate UDP-N-acetyl-alpha-D-glucosamine. Acetyl-CoA is bound by residues alanine 379, 385-386 (NY), serine 404, alanine 422, and arginine 439.

The protein in the N-terminal section; belongs to the N-acetylglucosamine-1-phosphate uridyltransferase family. This sequence in the C-terminal section; belongs to the transferase hexapeptide repeat family. As to quaternary structure, homotrimer. Mg(2+) serves as cofactor.

Its subcellular location is the cytoplasm. It catalyses the reaction alpha-D-glucosamine 1-phosphate + acetyl-CoA = N-acetyl-alpha-D-glucosamine 1-phosphate + CoA + H(+). It carries out the reaction N-acetyl-alpha-D-glucosamine 1-phosphate + UTP + H(+) = UDP-N-acetyl-alpha-D-glucosamine + diphosphate. It participates in nucleotide-sugar biosynthesis; UDP-N-acetyl-alpha-D-glucosamine biosynthesis; N-acetyl-alpha-D-glucosamine 1-phosphate from alpha-D-glucosamine 6-phosphate (route II): step 2/2. Its pathway is nucleotide-sugar biosynthesis; UDP-N-acetyl-alpha-D-glucosamine biosynthesis; UDP-N-acetyl-alpha-D-glucosamine from N-acetyl-alpha-D-glucosamine 1-phosphate: step 1/1. It functions in the pathway bacterial outer membrane biogenesis; LPS lipid A biosynthesis. Catalyzes the last two sequential reactions in the de novo biosynthetic pathway for UDP-N-acetylglucosamine (UDP-GlcNAc). The C-terminal domain catalyzes the transfer of acetyl group from acetyl coenzyme A to glucosamine-1-phosphate (GlcN-1-P) to produce N-acetylglucosamine-1-phosphate (GlcNAc-1-P), which is converted into UDP-GlcNAc by the transfer of uridine 5-monophosphate (from uridine 5-triphosphate), a reaction catalyzed by the N-terminal domain. The chain is Bifunctional protein GlmU from Streptococcus pneumoniae (strain Hungary19A-6).